The sequence spans 61 residues: Disintegrin atroxatin (61 aa).

The Disintegrin domain maps to 1–61 (NPCCDAATCK…ADCPRKGIYG (61 aa)). Intrachain disulfides connect Cys3–Cys26, Cys9–Cys23, Cys17–Cys23, Cys22–Cys47, and Cys35–Cys54. The Cell attachment site signature appears at 39–41 (RGD).

Belongs to the venom metalloproteinase (M12B) family. P-II subfamily. P-IIa sub-subfamily. As to quaternary structure, monomer (disintegrin). Expressed by the venom gland.

The protein resides in the secreted. In terms of biological role, inhibits fibrinogen interaction with platelets. Acts by binding to alpha-IIb/beta-3 (ITGA2B/ITGB3) on the platelet surface and inhibits aggregation induced by ADP, thrombin, platelet-activating factor and collagen. This chain is Disintegrin atroxatin, found in Crotalus atrox (Western diamondback rattlesnake).